Here is a 420-residue protein sequence, read N- to C-terminus: Glutamate-1-semialdehyde 2,1-aminomutase (420 aa).

Lys-259 is modified (N6-(pyridoxal phosphate)lysine).

The protein belongs to the class-III pyridoxal-phosphate-dependent aminotransferase family. HemL subfamily. It depends on pyridoxal 5'-phosphate as a cofactor.

The protein resides in the cytoplasm. The catalysed reaction is (S)-4-amino-5-oxopentanoate = 5-aminolevulinate. It participates in porphyrin-containing compound metabolism; protoporphyrin-IX biosynthesis; 5-aminolevulinate from L-glutamyl-tRNA(Glu): step 2/2. The chain is Glutamate-1-semialdehyde 2,1-aminomutase from Sulfolobus acidocaldarius (strain ATCC 33909 / DSM 639 / JCM 8929 / NBRC 15157 / NCIMB 11770).